The sequence spans 287 residues: AA14 family lytic polysaccharide monooxygenase A (287 aa).

The first 18 residues, 1–18 (MLRILTLSILATSKLASA), serve as a signal peptide directing secretion. N-linked (GlcNAc...) asparagine glycans are attached at residues Asn-33, Asn-83, and Asn-137. Intrachain disulfides connect Cys-188–Cys-193, Cys-195–Cys-216, and Cys-236–Cys-243. Asn-238 carries N-linked (GlcNAc...) asparagine glycosylation.

Belongs to the polysaccharide monooxygenase AA14 family. Requires Cu(2+) as cofactor.

It is found in the secreted. Its function is as follows. Lytic polysaccharide monooxygenase (LPMO) that has a broad substrate specificity with strong oxidative activity on pure amorphous cellulose and xyloglucan and plays as a bifunctional enzyme to decompose some specific network structures formed between cellulose and hemicellulose in the plant cell walls. Catalysis by LPMOs requires the reduction of the active-site copper from Cu(II) to Cu(I) by a reducing agent and H(2)O(2) or O(2) as a cosubstrate. Simultaneously oxidizes cellulose, xylan and xyloglucan in natural hemi/cellulosic substrate such as fibrillated eucalyptus pulp, and releases native and oxidized cello-oligosaccharides, xylo-oligosaccharides and xyloglucan oligosaccharides from this substrate. The cellulolytic/hemicellulolytic activity becomes weaker as the contents of xylan increase in the alkaline-extracted hemi/cellulosic substrates. This Talaromyces rugulosus (Penicillium rugulosum) protein is AA14 family lytic polysaccharide monooxygenase A.